The chain runs to 558 residues: 2-isopropylmalate synthase (558 aa).

Positions 30-303 constitute a Pyruvate carboxyltransferase domain; that stretch reads PIWCSVDLRD…DPGIDCSDIN (274 aa). The Mg(2+) site is built by Asp39, His242, His244, and Asn278. Positions 437–558 are regulatory domain; that stretch reads QPGARLKFLD…ANRIVGRKAR (122 aa).

Belongs to the alpha-IPM synthase/homocitrate synthase family. LeuA type 2 subfamily. In terms of assembly, homodimer. Requires Mg(2+) as cofactor.

It is found in the cytoplasm. The catalysed reaction is 3-methyl-2-oxobutanoate + acetyl-CoA + H2O = (2S)-2-isopropylmalate + CoA + H(+). Its pathway is amino-acid biosynthesis; L-leucine biosynthesis; L-leucine from 3-methyl-2-oxobutanoate: step 1/4. Functionally, catalyzes the condensation of the acetyl group of acetyl-CoA with 3-methyl-2-oxobutanoate (2-ketoisovalerate) to form 3-carboxy-3-hydroxy-4-methylpentanoate (2-isopropylmalate). The chain is 2-isopropylmalate synthase from Mesorhizobium japonicum (strain LMG 29417 / CECT 9101 / MAFF 303099) (Mesorhizobium loti (strain MAFF 303099)).